The sequence spans 98 residues: uncharacterized protein (98 aa).

This is an uncharacterized protein from Dictyostelium discoideum (Social amoeba).